The chain runs to 264 residues: tRNA pseudouridine synthase A (264 aa).

The Nucleophile role is filled by D51. Y109 serves as a coordination point for substrate.

Belongs to the tRNA pseudouridine synthase TruA family. In terms of assembly, homodimer.

The catalysed reaction is uridine(38/39/40) in tRNA = pseudouridine(38/39/40) in tRNA. In terms of biological role, formation of pseudouridine at positions 38, 39 and 40 in the anticodon stem and loop of transfer RNAs. This Vibrio campbellii (strain ATCC BAA-1116) protein is tRNA pseudouridine synthase A.